The following is a 254-amino-acid chain: MNDTLAITYSTPARLSEAEKLARQMKLPLVSLNSTDYSFLLVFTPAHLELRSTGTKAPGPLYVDFLKGATAHRRLFGGGRSQLIVRAVGLKSHPHPTILDLTAGLGRDAFVLANLGCDVLMIERNPVIALLLRDGLERAQSVEWFKSLKLELIEIDAQIYLSTLKKQFDVIYMDPMYPIRKKSALVKKEMRILRRLVGADDDAPQLLALALKKAKHRVVIKRPRLSNPLPGPAPDVVYEGKSSRFDVYLLKPSS.

S-adenosyl-L-methionine-binding positions include 107–108, 123–124, and aspartate 174; these read RD and ER.

This sequence belongs to the methyltransferase superfamily. RsmJ family.

The protein resides in the cytoplasm. The enzyme catalyses guanosine(1516) in 16S rRNA + S-adenosyl-L-methionine = N(2)-methylguanosine(1516) in 16S rRNA + S-adenosyl-L-homocysteine + H(+). Specifically methylates the guanosine in position 1516 of 16S rRNA. The chain is Ribosomal RNA small subunit methyltransferase J from Coxiella burnetii (strain CbuK_Q154) (Coxiella burnetii (strain Q154)).